Here is a 427-residue protein sequence, read N- to C-terminus: Phosphatase PSR1 (427 aa).

2 S-palmitoyl cysteine lipidation sites follow: Cys-9 and Cys-10. The span at 14-34 shows a compositional bias: polar residues; the sequence is TTQSNSNSAYRQQQSSSLNKN. Positions 14 to 223 are disordered; sequence TTQSNSNSAY…SNDADDEDDE (210 aa). Positions 35 to 48 are enriched in basic residues; sequence RSVKHSNTKSRTRG. The segment covering 49–80 has biased composition (polar residues); that stretch reads VHQTNSPPSKTNSAATFSSTERSTGKSGISTN. Residues 104–118 are compositionally biased toward basic and acidic residues; it reads KVEKRISKDDLYEEK. A Phosphoserine modification is found at Ser-110. Positions 119–130 are enriched in acidic residues; the sequence is YEVDEDEEIDDE. The segment covering 131-151 has biased composition (basic and acidic residues); that stretch reads DNRRSRGIVQEKGDAVKDTSR. Lys-154 participates in a covalent cross-link: Glycyl lysine isopeptide (Lys-Gly) (interchain with G-Cter in ubiquitin). A compositionally biased stretch (low complexity) spans 155-183; the sequence is QQQQQQQQSQPQPQPQSQSQSQSQSQSQQ. Positions 184–214 are enriched in polar residues; it reads RGPTVQVSSDHLIQDMNLSRVSSSSQASETS. The FCP1 homology domain maps to 253–411; the sequence is STKGKKCLIL…LDIIPLLEDL (159 aa).

Interacts with WHI2.

It localises to the cell membrane. Functionally, has phosphatase activity in vitro. Involved in the response to sodium and lithium ion stress (but not to potassium or sorbitol stress) by inducing transcription of the sodium pump ENA1/PMR2. Acts through a calcineurin-independent pathway and is functionally redundant with PSR2. Also involved in the general stress response; acts together with WHI2 to activate stress response element (STRE)-mediated gene expression, possibly through dephosphorylation of MSN2. In Saccharomyces cerevisiae (strain ATCC 204508 / S288c) (Baker's yeast), this protein is Phosphatase PSR1 (PSR1).